Consider the following 153-residue polypeptide: 6,7-dimethyl-8-ribityllumazine synthase (153 aa).

Residues phenylalanine 22, 56-58 (AFE), and 80-82 (AVI) contribute to the 5-amino-6-(D-ribitylamino)uracil site. 85 to 86 (AT) provides a ligand contact to (2S)-2-hydroxy-3-oxobutyl phosphate. Histidine 88 functions as the Proton donor in the catalytic mechanism. A 5-amino-6-(D-ribitylamino)uracil-binding site is contributed by phenylalanine 113. Position 127 (arginine 127) interacts with (2S)-2-hydroxy-3-oxobutyl phosphate.

This sequence belongs to the DMRL synthase family.

The catalysed reaction is (2S)-2-hydroxy-3-oxobutyl phosphate + 5-amino-6-(D-ribitylamino)uracil = 6,7-dimethyl-8-(1-D-ribityl)lumazine + phosphate + 2 H2O + H(+). It participates in cofactor biosynthesis; riboflavin biosynthesis; riboflavin from 2-hydroxy-3-oxobutyl phosphate and 5-amino-6-(D-ribitylamino)uracil: step 1/2. In terms of biological role, catalyzes the formation of 6,7-dimethyl-8-ribityllumazine by condensation of 5-amino-6-(D-ribitylamino)uracil with 3,4-dihydroxy-2-butanone 4-phosphate. This is the penultimate step in the biosynthesis of riboflavin. This Alkaliphilus metalliredigens (strain QYMF) protein is 6,7-dimethyl-8-ribityllumazine synthase.